A 271-amino-acid chain; its full sequence is Tryptophan synthase alpha chain (271 aa).

Catalysis depends on proton acceptor residues Glu49 and Asp60.

Belongs to the TrpA family. As to quaternary structure, tetramer of two alpha and two beta chains.

The catalysed reaction is (1S,2R)-1-C-(indol-3-yl)glycerol 3-phosphate + L-serine = D-glyceraldehyde 3-phosphate + L-tryptophan + H2O. It functions in the pathway amino-acid biosynthesis; L-tryptophan biosynthesis; L-tryptophan from chorismate: step 5/5. The alpha subunit is responsible for the aldol cleavage of indoleglycerol phosphate to indole and glyceraldehyde 3-phosphate. This Burkholderia thailandensis (strain ATCC 700388 / DSM 13276 / CCUG 48851 / CIP 106301 / E264) protein is Tryptophan synthase alpha chain.